The chain runs to 351 residues: MSVNTKNWQELKKPTQLDVKESSDKARKATFIAEPLERGYGLTLGNALRRVLLASLQGAAITSIKIENVLHEFSSLAGVREDVTDIVLNVKQIALKMEGEGPKRLQLSATGPAEVKAGDIAVSGDIEVMNKDLVICHLDEGATLNMELTADIGSGYVPAVQNRPADAPIGLIPVDSLYSPIRQVSYKVEKARVGQELDFDKLSLTIETDGTVTPEDAVAYAARILQDQLTLFVHFEDGIPQPQSAMIGVAAEPQQDDANQLNRYLLKKVDELELSVRSANCLKNDNIIYIGDLVQKTEAEMLRTPNFGRKSLNEIKEVLSSMGLRLGMDIPGWPPENIEEMAKKLEQELLG.

The interval 1–236 (MSVNTKNWQE…DQLTLFVHFE (236 aa)) is alpha N-terminal domain (alpha-NTD). The segment at 256–351 (DDANQLNRYL…AKKLEQELLG (96 aa)) is alpha C-terminal domain (alpha-CTD).

It belongs to the RNA polymerase alpha chain family. In terms of assembly, homodimer. The RNAP catalytic core consists of 2 alpha, 1 beta, 1 beta' and 1 omega subunit. When a sigma factor is associated with the core the holoenzyme is formed, which can initiate transcription.

The catalysed reaction is RNA(n) + a ribonucleoside 5'-triphosphate = RNA(n+1) + diphosphate. DNA-dependent RNA polymerase catalyzes the transcription of DNA into RNA using the four ribonucleoside triphosphates as substrates. The chain is DNA-directed RNA polymerase subunit alpha from Erythrobacter litoralis (strain HTCC2594).